The primary structure comprises 136 residues: MREPAPGAEPVATPPASHWFIYMVRTASGLLYTGISTDPLRRLRQHQSGKGSRALRGKGPLTLAWQQAVGEKGAALRLEYRLKQQSKAFKEQLLTQPERWLACSQSWLATAQTQKRPRYAAAKEGSDNRECQRQVD.

In terms of domain architecture, GIY-YIG spans 17–92; the sequence is SHWFIYMVRT…KQQSKAFKEQ (76 aa). Positions 114–136 are disordered; sequence QKRPRYAAAKEGSDNRECQRQVD. The span at 124–136 shows a compositional bias: basic and acidic residues; sequence EGSDNRECQRQVD.

The protein belongs to the UPF0213 family.

This Aeromonas hydrophila subsp. hydrophila (strain ATCC 7966 / DSM 30187 / BCRC 13018 / CCUG 14551 / JCM 1027 / KCTC 2358 / NCIMB 9240 / NCTC 8049) protein is UPF0213 protein AHA_3736.